A 386-amino-acid chain; its full sequence is Succinate--CoA ligase [ADP-forming] subunit beta (386 aa).

Residues 9 to 244 (KEILRKYGVS…LDEEDPKEIE (236 aa)) form the ATP-grasp domain. ATP-binding positions include Lys46, 53–55 (GRG), Glu99, Cys102, and Glu107. Residues Asn199 and Asp213 each contribute to the Mg(2+) site. Substrate contacts are provided by residues Asn264 and 321 to 323 (GIM).

It belongs to the succinate/malate CoA ligase beta subunit family. As to quaternary structure, heterotetramer of two alpha and two beta subunits. The cofactor is Mg(2+).

The enzyme catalyses succinate + ATP + CoA = succinyl-CoA + ADP + phosphate. The catalysed reaction is GTP + succinate + CoA = succinyl-CoA + GDP + phosphate. It participates in carbohydrate metabolism; tricarboxylic acid cycle; succinate from succinyl-CoA (ligase route): step 1/1. Its function is as follows. Succinyl-CoA synthetase functions in the citric acid cycle (TCA), coupling the hydrolysis of succinyl-CoA to the synthesis of either ATP or GTP and thus represents the only step of substrate-level phosphorylation in the TCA. The beta subunit provides nucleotide specificity of the enzyme and binds the substrate succinate, while the binding sites for coenzyme A and phosphate are found in the alpha subunit. This Bacillus pumilus (strain SAFR-032) protein is Succinate--CoA ligase [ADP-forming] subunit beta.